Consider the following 120-residue polypeptide: VQLQQSGAELVRAGSSVKMSCKASGYTFTSYGINWVKQRPGQGLEWIGYINPGNGYTKYNEKFKGKTTLTVDKSSSTAYMQLRSLTSEDSAVYFCARSVYYGGSYYFDYWGQGTTLTVSS.

The Ig-like domain occupies 1–111 (VQLQQSGAEL…GGSYYFDYWG (111 aa)).

In Mus musculus (Mouse), this protein is Ig heavy chain V region 36-65.